A 443-amino-acid polypeptide reads, in one-letter code: UDP-N-acetylmuramate--L-alanine ligase (443 aa).

An ATP-binding site is contributed by 110–116; the sequence is GAHGKTS.

Belongs to the MurCDEF family.

It is found in the cytoplasm. The enzyme catalyses UDP-N-acetyl-alpha-D-muramate + L-alanine + ATP = UDP-N-acetyl-alpha-D-muramoyl-L-alanine + ADP + phosphate + H(+). It functions in the pathway cell wall biogenesis; peptidoglycan biosynthesis. In terms of biological role, cell wall formation. This Streptococcus suis (strain 98HAH33) protein is UDP-N-acetylmuramate--L-alanine ligase.